The primary structure comprises 497 residues: Glycerol kinase (497 aa).

Thr21 contributes to the ADP binding site. Residues Thr21 and Thr22 each coordinate ATP. Residue Thr21 coordinates sn-glycerol 3-phosphate. Residue Arg25 participates in ADP binding. Sn-glycerol 3-phosphate contacts are provided by Arg88, Glu89, Tyr140, and Asp244. Glycerol is bound by residues Arg88, Glu89, Tyr140, Asp244, and Gln245. 2 residues coordinate ADP: Thr266 and Gly309. Residues Thr266, Gly309, Gln313, and Gly410 each contribute to the ATP site. Residues Gly410 and Asn414 each coordinate ADP.

The protein belongs to the FGGY kinase family.

The enzyme catalyses glycerol + ATP = sn-glycerol 3-phosphate + ADP + H(+). Its pathway is polyol metabolism; glycerol degradation via glycerol kinase pathway; sn-glycerol 3-phosphate from glycerol: step 1/1. With respect to regulation, inhibited by fructose 1,6-bisphosphate (FBP). In terms of biological role, key enzyme in the regulation of glycerol uptake and metabolism. Catalyzes the phosphorylation of glycerol to yield sn-glycerol 3-phosphate. The protein is Glycerol kinase of Gloeobacter violaceus (strain ATCC 29082 / PCC 7421).